The sequence spans 87 residues: Small ribosomal subunit protein bS20 (87 aa).

This sequence belongs to the bacterial ribosomal protein bS20 family.

Binds directly to 16S ribosomal RNA. The polypeptide is Small ribosomal subunit protein bS20 (Brachyspira hyodysenteriae (strain ATCC 49526 / WA1)).